The primary structure comprises 360 residues: Phospho-N-acetylmuramoyl-pentapeptide-transferase (360 aa).

A run of 10 helical transmembrane segments spans residues 25 to 45 (RGIL…PWMI), 73 to 93 (TMGG…WADL), 97 to 117 (YVWV…VDDY), 135 to 155 (FWQS…APSA), 170 to 190 (IPLG…SSNA), 199 to 219 (GLAI…CYLS), 236 to 256 (AGEL…FLWF), 263 to 283 (VFMG…MAVI), 288 to 308 (MVLF…VIQV), and 338 to 358 (VIVR…ATLK).

This sequence belongs to the glycosyltransferase 4 family. MraY subfamily. The cofactor is Mg(2+).

It is found in the cell inner membrane. The enzyme catalyses UDP-N-acetyl-alpha-D-muramoyl-L-alanyl-gamma-D-glutamyl-meso-2,6-diaminopimeloyl-D-alanyl-D-alanine + di-trans,octa-cis-undecaprenyl phosphate = di-trans,octa-cis-undecaprenyl diphospho-N-acetyl-alpha-D-muramoyl-L-alanyl-D-glutamyl-meso-2,6-diaminopimeloyl-D-alanyl-D-alanine + UMP. Its pathway is cell wall biogenesis; peptidoglycan biosynthesis. Functionally, catalyzes the initial step of the lipid cycle reactions in the biosynthesis of the cell wall peptidoglycan: transfers peptidoglycan precursor phospho-MurNAc-pentapeptide from UDP-MurNAc-pentapeptide onto the lipid carrier undecaprenyl phosphate, yielding undecaprenyl-pyrophosphoryl-MurNAc-pentapeptide, known as lipid I. This is Phospho-N-acetylmuramoyl-pentapeptide-transferase from Pseudomonas syringae pv. syringae (strain B728a).